A 310-amino-acid chain; its full sequence is Transcription factor MYB53 (310 aa).

2 consecutive HTH myb-type domains span residues 9 to 61 (ETGL…TNYL) and 62 to 116 (RPDI…KKKL). 2 DNA-binding regions (H-T-H motif) span residues 37–61 (WSAL…TNYL) and 89–112 (WSMI…NTHL).

Interacts with FBX5. As to expression, highly expressed in roots and at lower levels in leaves, stems and flowers.

The protein localises to the nucleus. Probable transcription factor. The chain is Transcription factor MYB53 from Arabidopsis thaliana (Mouse-ear cress).